We begin with the raw amino-acid sequence, 218 residues long: Probable transaldolase (218 aa).

Residue K83 is the Schiff-base intermediate with substrate of the active site.

This sequence belongs to the transaldolase family. Type 3B subfamily.

The protein localises to the cytoplasm. It catalyses the reaction D-sedoheptulose 7-phosphate + D-glyceraldehyde 3-phosphate = D-erythrose 4-phosphate + beta-D-fructose 6-phosphate. The protein operates within carbohydrate degradation; pentose phosphate pathway; D-glyceraldehyde 3-phosphate and beta-D-fructose 6-phosphate from D-ribose 5-phosphate and D-xylulose 5-phosphate (non-oxidative stage): step 2/3. Transaldolase is important for the balance of metabolites in the pentose-phosphate pathway. This is Probable transaldolase (tal) from Mesorhizobium japonicum (strain LMG 29417 / CECT 9101 / MAFF 303099) (Mesorhizobium loti (strain MAFF 303099)).